The primary structure comprises 216 residues: Ribosome maturation factor RimP (216 aa).

The protein belongs to the RimP family.

The protein localises to the cytoplasm. Required for maturation of 30S ribosomal subunits. The sequence is that of Ribosome maturation factor RimP from Bartonella henselae (strain ATCC 49882 / DSM 28221 / CCUG 30454 / Houston 1) (Rochalimaea henselae).